The primary structure comprises 763 residues: Phosphoglycerol transferase I (763 aa).

The next 4 membrane-spanning stretches (helical) occupy residues 1 to 21 (MSEL…AWKA), 26 to 46 (WWFA…ITLF), 77 to 97 (ILPG…LGWI), and 108 to 128 (FGYS…SPAF).

It belongs to the OpgB family.

It is found in the cell inner membrane. The catalysed reaction is a phosphatidylglycerol + a membrane-derived-oligosaccharide D-glucose = a 1,2-diacyl-sn-glycerol + a membrane-derived-oligosaccharide 6-(glycerophospho)-D-glucose.. Its pathway is glycan metabolism; osmoregulated periplasmic glucan (OPG) biosynthesis. Its function is as follows. Transfers a phosphoglycerol residue from phosphatidylglycerol to the membrane-bound nascent glucan backbones. In Shigella boydii serotype 18 (strain CDC 3083-94 / BS512), this protein is Phosphoglycerol transferase I.